The sequence spans 968 residues: RNA polymerase-associated protein RapA (968 aa).

The Helicase ATP-binding domain maps to 164–334 (DVGRRHAPRV…FARLRLLDPN (171 aa)). Position 177-184 (177-184 (DEVGLGKT)) interacts with ATP. A DEAH box motif is present at residues 280–283 (DEAH). Positions 490 to 662 (RVEWLMGYLT…YLASPVQTEG (173 aa)) constitute a Helicase C-terminal domain.

The protein belongs to the SNF2/RAD54 helicase family. RapA subfamily. Interacts with the RNAP. Has a higher affinity for the core RNAP than for the holoenzyme. Its ATPase activity is stimulated by binding to RNAP.

Transcription regulator that activates transcription by stimulating RNA polymerase (RNAP) recycling in case of stress conditions such as supercoiled DNA or high salt concentrations. Probably acts by releasing the RNAP, when it is trapped or immobilized on tightly supercoiled DNA. Does not activate transcription on linear DNA. Probably not involved in DNA repair. The polypeptide is RNA polymerase-associated protein RapA (Shigella sonnei (strain Ss046)).